The primary structure comprises 942 residues: Protein inturned (942 aa).

Residues 1–13 (MADPARRDPRGRA) show a composition bias toward basic and acidic residues. Disordered regions lie at residues 1-54 (MADP…LEPE) and 129-150 (PKRHHKKKSSNTGPVSILKHQS). Residues 22 to 32 (SQEEEEEESDS) are compositionally biased toward acidic residues. The segment covering 33–48 (DAGASSLGSCSSASSD) has biased composition (low complexity). Residues 138 to 150 (SNTGPVSILKHQS) are compositionally biased toward polar residues. The 79-residue stretch at 189 to 267 (LVGVIHQTKW…PMQVKLTFEN (79 aa)) folds into the PDZ domain. A phosphoserine mark is found at Ser-674 and Ser-678. Residues 707-752 (KARKPSPSRIGGGREPGEGEENVGLSPHTTPDTVRKQRESEGSDDN) are disordered.

This sequence belongs to the inturned family. In terms of assembly, component of the CPLANE (ciliogenesis and planar polarity effectors) complex, composed of INTU, FUZ and WDPCP. Interacts with CPLANE1. Interacts with NPHP4 and DAAM1; INTU is mediating the interaction between NPHP4 and DAAM1.

It localises to the cytoplasm. The protein resides in the cell surface. The protein localises to the cytoskeleton. Its subcellular location is the cilium basal body. It is found in the microtubule organizing center. It localises to the centrosome. The protein resides in the centriole. Its function is as follows. Plays a key role in ciliogenesis and embryonic development. Regulator of cilia formation by controlling the organization of the apical actin cytoskeleton and the positioning of the basal bodies at the apical cell surface, which in turn is essential for the normal orientation of elongating ciliary microtubules. Plays a key role in definition of cell polarity via its role in ciliogenesis but not via conversion extension. Has an indirect effect on hedgehog signaling. Proposed to function as core component of the CPLANE (ciliogenesis and planar polarity effectors) complex involved in the recruitment of peripheral IFT-A proteins to basal bodies. Required for recruitment of CPLANE2 to the mother centriole. Binds phosphatidylinositol 3-phosphate with highest affinity, followed by phosphatidylinositol 4-phosphate and phosphatidylinositol 5-phosphate. The chain is Protein inturned (Intu) from Rattus norvegicus (Rat).